The sequence spans 355 residues: Serum paraoxonase/arylesterase 1 (355 aa).

Cys-42 and Cys-353 are joined by a disulfide. The Ca(2+) site is built by Glu-53 and Asp-54. His-115 functions as the Proton acceptor in the catalytic mechanism. Ca(2+) is bound by residues Ile-117, Asn-168, Asp-169, and Asn-224. The N-linked (GlcNAc...) asparagine glycan is linked to Asn-253. Ca(2+) is bound by residues Asp-269 and Asn-270. 2 N-linked (GlcNAc...) asparagine glycosylation sites follow: Asn-270 and Asn-324.

This sequence belongs to the paraoxonase family. In terms of assembly, homodimer. Interacts with CLU. Ca(2+) serves as cofactor. Post-translationally, glycosylated. In terms of processing, the signal sequence is not cleaved. As to expression, plasma. Associated with HDL.

Its subcellular location is the secreted. The protein resides in the extracellular space. The catalysed reaction is a phenyl acetate + H2O = a phenol + acetate + H(+). It carries out the reaction An aryl dialkyl phosphate + H2O = dialkyl phosphate + an aryl alcohol.. It catalyses the reaction an N-acyl-L-homoserine lactone + H2O = an N-acyl-L-homoserine + H(+). Hydrolyzes the toxic metabolites of a variety of organophosphorus insecticides. Capable of hydrolyzing a broad spectrum of organophosphate substrates and lactones, and a number of aromatic carboxylic acid esters. Mediates an enzymatic protection of low density lipoproteins against oxidative modification. This is Serum paraoxonase/arylesterase 1 (Pon1) from Rattus norvegicus (Rat).